The primary structure comprises 109 residues: Large ribosomal subunit protein uL22 (109 aa).

Belongs to the universal ribosomal protein uL22 family. As to quaternary structure, part of the 50S ribosomal subunit.

In terms of biological role, this protein binds specifically to 23S rRNA; its binding is stimulated by other ribosomal proteins, e.g. L4, L17, and L20. It is important during the early stages of 50S assembly. It makes multiple contacts with different domains of the 23S rRNA in the assembled 50S subunit and ribosome. Functionally, the globular domain of the protein is located near the polypeptide exit tunnel on the outside of the subunit, while an extended beta-hairpin is found that lines the wall of the exit tunnel in the center of the 70S ribosome. The chain is Large ribosomal subunit protein uL22 from Blochmanniella pennsylvanica (strain BPEN).